Here is a 719-residue protein sequence, read N- to C-terminus: MFTSGKVLPTKIQPPLLRPMAYRVLSKKYGLSIKSDGLAALSDFIGSTFGMDWKRNPDTIKFLEVFATVWKQQERGLFVDSTGVKDVINELKEREKATLQESQNMASIPPKTKTYNNGGGKTTTIDRFLTKRPSPSDNDEGPLDQSIDDIPVSQATQIDEEELPMAQEISDQISSPARDQTPEEEFDNRILNWRDYFRIINTTDQKKFSYNPVKRQIFYQPPKDQLKSVLKIPNAQAKTDLFRTRYFLTRDRLLRNESFQSSHDTFNPLSSMIQLKNNINNNNQDDTPTGLSITQIKNLLGRDGQNFLILGVLKMNPKGQWSLEDASGSIDIDISQTLPSPGLFYIPGAIVLAEGIYYTVGHTFAVTSMTFPPGERRDKTLDHIGNLDLLGIHGTEKSSYIPRLDNEIKIRLHLLEQDLTHQKFVLLGGDLFLDDQHVMDGLKKVFTKLDQEAPTVIVLFGSFSSFPVHAAMSSKNISSTTEYKNNFDSLAEMLSQFENIINHTHVVLIPGPHDPWVSLCSLGANGSLPQSSIPTHFSKRMNKICKNITWASNPTRIAYLSQEIVLFRDNFLELCKRHQILFPVVESKRAEDLAELEEQMANNSIDDTTILVDRIISEKQQLPAKVLESRKVVKTLLDQGHLSPFVDSIRPISWDMDHTLTLYPIPSTLILADMSSAAYDLTYNGCKTINPGKFIHKRQARYIQFQPYLKSVSQEEVFF.

The disordered stretch occupies residues 107 to 147 (SIPPKTKTYNNGGGKTTTIDRFLTKRPSPSDNDEGPLDQSI).

The protein belongs to the DNA polymerase epsilon subunit B family. As to quaternary structure, heterotetramer. Consists of four subunits: POL2, DPB2, DPB3 and DPB4.

It localises to the nucleus. As accessory component of the DNA polymerase epsilon (DNA polymerase II) participates in chromosomal DNA replication. The protein is DNA polymerase epsilon subunit B (DPB2) of Candida glabrata (strain ATCC 2001 / BCRC 20586 / JCM 3761 / NBRC 0622 / NRRL Y-65 / CBS 138) (Yeast).